A 342-amino-acid polypeptide reads, in one-letter code: Ribosomal RNA small subunit methyltransferase H (342 aa).

S-adenosyl-L-methionine-binding positions include 43–45 (GGY), Asp-61, Phe-87, Asp-108, and Gln-115. Positions 322-342 (ALDEASDGMNLPPLAELEKSR) are disordered.

This sequence belongs to the methyltransferase superfamily. RsmH family.

The protein localises to the cytoplasm. It carries out the reaction cytidine(1402) in 16S rRNA + S-adenosyl-L-methionine = N(4)-methylcytidine(1402) in 16S rRNA + S-adenosyl-L-homocysteine + H(+). Functionally, specifically methylates the N4 position of cytidine in position 1402 (C1402) of 16S rRNA. In Hyphomonas neptunium (strain ATCC 15444), this protein is Ribosomal RNA small subunit methyltransferase H.